Reading from the N-terminus, the 1264-residue chain is Ubiquitin carboxyl-terminal hydrolase usp-48 (1264 aa).

One can recognise a USP domain in the interval 108–430 (AGLINGGNFC…ACYGLLYRRR (323 aa)). Catalysis depends on C117, which acts as the Nucleophile. H366 acts as the Proton acceptor in catalysis. Disordered regions lie at residues 390–415 (IPKP…KEKY), 522–610 (AKGE…IMDT), and 630–679 (TVEV…PVSS). Composition is skewed to basic and acidic residues over residues 403–415 (KTEK…KEKY) and 532–543 (EASENEEKKKNE). Residues 516 to 547 (AQEYEVAKGEKKKKKKEASENEEKKKNEEDEA) are a coiled coil. Over residues 565-575 (SEPSTSAAATE) the composition is skewed to low complexity. 2 stretches are compositionally biased toward polar residues: residues 587 to 599 (ETPN…STQV) and 663 to 678 (NGTN…QPVS).

Belongs to the peptidase C19 family. In terms of tissue distribution, broadly expressed. Expressed in germline.

It is found in the nucleus. It localises to the chromosome. The catalysed reaction is Thiol-dependent hydrolysis of ester, thioester, amide, peptide and isopeptide bonds formed by the C-terminal Gly of ubiquitin (a 76-residue protein attached to proteins as an intracellular targeting signal).. Its function is as follows. Recognizes and hydrolyzes the peptide bond at the C-terminal Gly of ubiquitin. Involved in the processing of poly-ubiquitin precursors as well as that of ubiquitinated proteins. Required post-developmentally to restrict the plasticity of epidermal cells, probably by regulating gene expression. In Caenorhabditis elegans, this protein is Ubiquitin carboxyl-terminal hydrolase usp-48.